Reading from the N-terminus, the 618-residue chain is Zinc finger protein 48 (618 aa).

At M1 the chain carries N-acetylmethionine. Composition is skewed to basic and acidic residues over residues 1–22 and 39–51; these read MERAVEPWGPDLHRPEEREPQR and EFEHTPQEDDLGF. Disordered stretches follow at residues 1–51 and 78–109; these read MERA…DLGF and LWVQREGLGKPQPRDRGPRLLGEPRWGQASSD. K87 participates in a covalent cross-link: Glycyl lysine isopeptide (Lys-Gly) (interchain with G-Cter in SUMO2). 2 consecutive C2H2-type zinc fingers follow at residues 112–134 and 140–162; these read AVCGECGKSFRQMSDLVKHQRTH and YKCGVCGKGFGDSSARIKHQRTH. The interval 157 to 189 is disordered; the sequence is KHQRTHSGEKPYRARPPAQGPPKIPRSRIPAGE. Residue K179 forms a Glycyl lysine isopeptide (Lys-Gly) (interchain with G-Cter in SUMO2) linkage. 2 C2H2-type zinc fingers span residues 192-214 and 220-242; these read TICGECGKSFRQSSDLVKHQRTH and YKCGICGKGFGDSSARIKHQRTH. A disordered region spans residues 235–271; the sequence is RIKHQRTHRGEQPPRPVVPRRQPSRAATAATQGPKAQ. K269 participates in a covalent cross-link: Glycyl lysine isopeptide (Lys-Gly) (interchain with G-Cter in SUMO2). C2H2-type zinc fingers lie at residues 275-297 and 303-325; these read YICTDCGKRFVLSCSLLSHQRSH and FGCDVCGKEFARGSDLVKHLRVH. K329 participates in a covalent cross-link: Glycyl lysine isopeptide (Lys-Gly) (interchain with G-Cter in SUMO2). C2H2-type zinc fingers lie at residues 331-353 and 359-381; these read YLCPECGKGFADSSARVKHLRTH and HACPECDRTFSLSSTLLRHRLTH. The segment covering 392–414 has biased composition (pro residues); sequence YPLPALIPSPPPPPLGTSPPLTP. Residues 392–457 form a disordered region; it reads YPLPALIPSP…DKPHKCPECG (66 aa). The span at 415–432 shows a compositional bias: low complexity; the sequence is RSPSHSGEPFGLPGLEPE. Residues 451 to 473 form a C2H2-type 9 zinc finger; sequence HKCPECGKGFRRSSDLVKHHRVH. Residue K477 forms a Glycyl lysine isopeptide (Lys-Gly) (interchain with G-Cter in SUMO2) linkage. Residues 479–501 form a C2H2-type 10 zinc finger; the sequence is YLCPECGKGFADSSARVKHLRTH. The tract at residues 500-540 is disordered; sequence THRGERARPPPPSTLLRPHNPPGPVPMAPRPRVRAQPSGPS. Pro residues predominate over residues 508–528; it reads PPPPSTLLRPHNPPGPVPMAP. C2H2-type zinc fingers lie at residues 543-565 and 571-593; these read HVCGFCGKEFPRSSDLVKHRRTH and YKCAECGKGFGDSSARIKHQRGH. Residue K610 forms a Glycyl lysine isopeptide (Lys-Gly) (interchain with G-Cter in SUMO2) linkage.

The protein belongs to the krueppel C2H2-type zinc-finger protein family.

It localises to the nucleus. May be involved in transcriptional regulation. In Homo sapiens (Human), this protein is Zinc finger protein 48 (ZNF48).